The following is a 174-amino-acid chain: Crossover junction endodeoxyribonuclease RuvC (174 aa).

Residues D8, E67, and D139 contribute to the active site. The Mg(2+) site is built by D8, E67, and D139.

This sequence belongs to the RuvC family. As to quaternary structure, homodimer which binds Holliday junction (HJ) DNA. The HJ becomes 2-fold symmetrical on binding to RuvC with unstacked arms; it has a different conformation from HJ DNA in complex with RuvA. In the full resolvosome a probable DNA-RuvA(4)-RuvB(12)-RuvC(2) complex forms which resolves the HJ. Requires Mg(2+) as cofactor.

The protein resides in the cytoplasm. The enzyme catalyses Endonucleolytic cleavage at a junction such as a reciprocal single-stranded crossover between two homologous DNA duplexes (Holliday junction).. Functionally, the RuvA-RuvB-RuvC complex processes Holliday junction (HJ) DNA during genetic recombination and DNA repair. Endonuclease that resolves HJ intermediates. Cleaves cruciform DNA by making single-stranded nicks across the HJ at symmetrical positions within the homologous arms, yielding a 5'-phosphate and a 3'-hydroxyl group; requires a central core of homology in the junction. The consensus cleavage sequence is 5'-(A/T)TT(C/G)-3'. Cleavage occurs on the 3'-side of the TT dinucleotide at the point of strand exchange. HJ branch migration catalyzed by RuvA-RuvB allows RuvC to scan DNA until it finds its consensus sequence, where it cleaves and resolves the cruciform DNA. The sequence is that of Crossover junction endodeoxyribonuclease RuvC from Pseudomonas paraeruginosa (strain DSM 24068 / PA7) (Pseudomonas aeruginosa (strain PA7)).